The following is a 260-amino-acid chain: Proline-rich protein 33 (260 aa).

Residues 29 to 132 (GVQTVSPRPE…KVAPKPSRSG (104 aa)) form a disordered region. A compositionally biased stretch (pro residues) spans 73–83 (GPSPYSPPPAA).

The sequence is that of Proline-rich protein 33 (Prr33) from Mus musculus (Mouse).